Reading from the N-terminus, the 259-residue chain is Haloacid dehalogenase-like hydrolase domain-containing protein 2 (259 aa).

Positions 13 and 15 each coordinate Mg(2+). Residues 13-15 (DLS) and 46-47 (TN) each bind substrate. A coiled-coil region spans residues 47–71 (NTTKESKQDLLERLKKLEFDISEDE). Lys-50 carries the post-translational modification N6-succinyllysine. Lys-179 contacts substrate. Residue Asp-204 participates in Mg(2+) binding.

This sequence belongs to the HAD-like hydrolase superfamily. Mg(2+) serves as cofactor.

The sequence is that of Haloacid dehalogenase-like hydrolase domain-containing protein 2 (HDHD2) from Bos taurus (Bovine).